Consider the following 396-residue polypeptide: Acetyl-CoA acetyltransferase (396 aa).

The active-site Acyl-thioester intermediate is the cysteine 89. CoA is bound by residues 223–225 and serine 249; that span reads RKS. Catalysis depends on proton acceptor residues histidine 352 and cysteine 382.

The protein belongs to the thiolase-like superfamily. Thiolase family.

Its subcellular location is the cytoplasm. It carries out the reaction 2 acetyl-CoA = acetoacetyl-CoA + CoA. The protein operates within lipid metabolism; butanoate metabolism. In terms of biological role, involved in syntrophic growth of S.wolfei with butyrate, as part of the butyrate oxidation pathway. Probably catalyzes the beta-keto thiolysis of acetoacetyl-CoA, leading to 2 acetyl-CoA molecules. This Syntrophomonas wolfei subsp. wolfei (strain DSM 2245B / Goettingen) protein is Acetyl-CoA acetyltransferase.